A 492-amino-acid polypeptide reads, in one-letter code: Probable glycogen synthase 2 (492 aa).

Lys-15 lines the ADP-alpha-D-glucose pocket.

This sequence belongs to the glycosyltransferase 1 family. Bacterial/plant glycogen synthase subfamily.

It carries out the reaction [(1-&gt;4)-alpha-D-glucosyl](n) + ADP-alpha-D-glucose = [(1-&gt;4)-alpha-D-glucosyl](n+1) + ADP + H(+). The protein operates within glycan biosynthesis; glycogen biosynthesis. Its function is as follows. Synthesizes alpha-1,4-glucan chains using ADP-glucose. The polypeptide is Probable glycogen synthase 2 (glgA2) (Nostoc sp. (strain PCC 7120 / SAG 25.82 / UTEX 2576)).